We begin with the raw amino-acid sequence, 344 residues long: Probable Delta(7)-sterol 5(6)-desaturase (344 aa).

3 consecutive transmembrane segments (helical) span residues 76–96, 123–143, and 160–180; these read LSLF…FASL, QTNA…VAEV, and WYDF…IYWI. The Fatty acid hydroxylase domain maps to 167–292; it reads PLFIMFTDFG…FTTLWDRLGG (126 aa). Positions 181–185 match the Histidine box-1 motif; that stretch reads HRGLH. The short motif at 194-198 is the Histidine box-2 element; the sequence is HKPHH. Residues 224–244 traverse the membrane as a helical segment; that stretch reads HIFPFIFPLQKMAYVGLFVFI. The Histidine box-3 motif lies at 269–273; the sequence is HSVHH.

Belongs to the sterol desaturase family. Requires Fe cation as cofactor.

The protein resides in the endoplasmic reticulum membrane. It carries out the reaction a Delta(7)-sterol + 2 Fe(II)-[cytochrome b5] + O2 + 2 H(+) = a Delta(5),Delta(7)-sterol + 2 Fe(III)-[cytochrome b5] + 2 H2O. It participates in steroid metabolism; ergosterol biosynthesis; ergosterol from zymosterol: step 3/5. In terms of biological role, catalyzes the introduction of a C-5 double bond in the B ring of ergosterol. May contribute to the regulation of ergosterol biosynthesis. The sequence is that of Probable Delta(7)-sterol 5(6)-desaturase from Neurospora crassa (strain ATCC 24698 / 74-OR23-1A / CBS 708.71 / DSM 1257 / FGSC 987).